The sequence spans 123 residues: Large ribosomal subunit protein bL12 (123 aa).

This sequence belongs to the bacterial ribosomal protein bL12 family. In terms of assembly, homodimer. Part of the ribosomal stalk of the 50S ribosomal subunit. Forms a multimeric L10(L12)X complex, where L10 forms an elongated spine to which 2 to 4 L12 dimers bind in a sequential fashion. Binds GTP-bound translation factors.

Functionally, forms part of the ribosomal stalk which helps the ribosome interact with GTP-bound translation factors. Is thus essential for accurate translation. This chain is Large ribosomal subunit protein bL12, found in Rickettsia bellii (strain OSU 85-389).